Reading from the N-terminus, the 166-residue chain is Ribosome maturation factor RimM (166 aa).

Residues 94–166 enclose the PRC barrel domain; the sequence is EGEYYHADLI…IVIEAAYADQ (73 aa).

This sequence belongs to the RimM family. In terms of assembly, binds ribosomal protein uS19.

It localises to the cytoplasm. Its function is as follows. An accessory protein needed during the final step in the assembly of 30S ribosomal subunit, possibly for assembly of the head region. Essential for efficient processing of 16S rRNA. May be needed both before and after RbfA during the maturation of 16S rRNA. It has affinity for free ribosomal 30S subunits but not for 70S ribosomes. The sequence is that of Ribosome maturation factor RimM from Novosphingobium aromaticivorans (strain ATCC 700278 / DSM 12444 / CCUG 56034 / CIP 105152 / NBRC 16084 / F199).